The following is a 524-amino-acid chain: Citrate exporter 1 (524 aa).

The tract at residues 1–49 is disordered; it reads MSSTTSSSRSDLEKVPVPQVTPRDSDSDKGSLSPEPSTLEAQSSEKPPH. Residues 34-45 are compositionally biased toward polar residues; that stretch reads PEPSTLEAQSSE. A helical transmembrane segment spans residues 60 to 80; sequence MVCIVSLAAIFSPLSSNIYFP. A glycan (N-linked (GlcNAc...) asparagine) is linked at N90. The next 5 membrane-spanning stretches (helical) occupy residues 95–115, 125–145, 155–175, 186–206, and 215–235; these read LATL…SFWG, PVFI…AESK, ALQA…IGDI, GIFG…GGIF, and IFWF…VLLP. N-linked (GlcNAc...) asparagine glycosylation is present at N244. The next 6 helical transmembrane spans lie at 296–316, 332–352, 395–415, 417–437, 459–479, and 481–501; these read VFIT…VTSS, IGLT…LVGY, TWWV…SLRT, LAVP…LFTI, LMRC…LDAL, and PDYT…LLYV.

This sequence belongs to the major facilitator superfamily.

The protein localises to the cell membrane. It catalyses the reaction citrate(in) = citrate(out). Its function is as follows. Transmembrane transporter that exports citrate across the cell membrane. This chain is Citrate exporter 1, found in Aspergillus niger (strain ATCC 1015 / CBS 113.46 / FGSC A1144 / LSHB Ac4 / NCTC 3858a / NRRL 328 / USDA 3528.7).